Here is a 202-residue protein sequence, read N- to C-terminus: Sterile alpha motif domain-containing protein 10 (202 aa).

The segment at 1-22 (MFTELRSKLSPPRARAGAVRPG) is disordered. Residues 118 to 184 (WSQQDVCKWL…LQQVLHLQVR (67 aa)) form the SAM domain.

This chain is Sterile alpha motif domain-containing protein 10, found in Mus musculus (Mouse).